Consider the following 142-residue polypeptide: Small ribosomal subunit protein uS12 (142 aa).

Belongs to the universal ribosomal protein uS12 family. As to quaternary structure, part of the 30S ribosomal subunit.

With S4 and S5 plays an important role in translational accuracy. Located at the interface of the 30S and 50S subunits. The polypeptide is Small ribosomal subunit protein uS12 (Methanosarcina barkeri (strain Fusaro / DSM 804)).